The primary structure comprises 121 residues: Large ribosomal subunit protein eL18 (121 aa).

This sequence belongs to the eukaryotic ribosomal protein eL18 family.

The protein is Large ribosomal subunit protein eL18 of Methanocaldococcus jannaschii (strain ATCC 43067 / DSM 2661 / JAL-1 / JCM 10045 / NBRC 100440) (Methanococcus jannaschii).